The sequence spans 334 residues: Rhomboid-like protein 14, mitochondrial (334 aa).

The N-terminal 87 residues, 1–87, are a transit peptide targeting the mitochondrion; that stretch reads MENFGEGRRS…RLFLSAFYHV (87 aa). The next 4 helical transmembrane spans lie at 114–134, 146–166, 176–196, and 197–217; these read EFAS…LLLA, AYYN…KVVL, VYGI…LVQM, and FVPN…IIYL. Serine 156 serves as the catalytic Nucleophile. The active-site Charge relay system is the histidine 206. The RanBP2-type zinc-finger motif lies at 273–302; it reads GPGIWRCQSCTYDNSGWLSACEMCGSGRAR.

It belongs to the peptidase S54 family.

It localises to the mitochondrion membrane. Its function is as follows. Probable rhomboid-type serine protease that catalyzes intramembrane proteolysis. May function in the heat-shock response pathway. The protein is Rhomboid-like protein 14, mitochondrial of Arabidopsis thaliana (Mouse-ear cress).